A 1468-amino-acid polypeptide reads, in one-letter code: DNA-directed RNA polymerase subunit beta (1468 aa).

This sequence belongs to the RNA polymerase beta chain family. In terms of assembly, the RNAP catalytic core consists of 2 alpha, 1 beta, 1 beta' and 1 omega subunit. When a sigma factor is associated with the core the holoenzyme is formed, which can initiate transcription.

It carries out the reaction RNA(n) + a ribonucleoside 5'-triphosphate = RNA(n+1) + diphosphate. DNA-dependent RNA polymerase catalyzes the transcription of DNA into RNA using the four ribonucleoside triphosphates as substrates. The chain is DNA-directed RNA polymerase subunit beta from Aquifex aeolicus (strain VF5).